Reading from the N-terminus, the 71-residue chain is Large ribosomal subunit protein bL31 (71 aa).

Residues cysteine 16, cysteine 18, cysteine 37, and cysteine 40 each coordinate Zn(2+).

It belongs to the bacterial ribosomal protein bL31 family. Type A subfamily. Part of the 50S ribosomal subunit. The cofactor is Zn(2+).

In terms of biological role, binds the 23S rRNA. The protein is Large ribosomal subunit protein bL31 of Mannheimia succiniciproducens (strain KCTC 0769BP / MBEL55E).